Reading from the N-terminus, the 500-residue chain is NAD(P)H-quinone oxidoreductase chain 4, chloroplastic (500 aa).

13 helical membrane passes run 4-24 (FPWL…MLFL), 35-55 (YTIS…CYNF), 87-107 (IGTI…AFPV), 134-154 (LLLF…LLSM), 167-187 (FILY…GISL), 211-231 (ILFY…IPLH), 242-262 (HYST…YGLV), 272-292 (AHSM…IYAA), 305-325 (IAYS…SITD), 330-350 (GAIL…FLAG), 386-406 (LALP…GIIT), 416-436 (IFII…LLSM), and 462-482 (LFLS…PDFV).

Belongs to the complex I subunit 4 family.

Its subcellular location is the plastid. It is found in the chloroplast thylakoid membrane. The catalysed reaction is a plastoquinone + NADH + (n+1) H(+)(in) = a plastoquinol + NAD(+) + n H(+)(out). It carries out the reaction a plastoquinone + NADPH + (n+1) H(+)(in) = a plastoquinol + NADP(+) + n H(+)(out). This Crucihimalaya wallichii (Rock-cress) protein is NAD(P)H-quinone oxidoreductase chain 4, chloroplastic.